A 256-amino-acid polypeptide reads, in one-letter code: 5'-nucleotidase SurE (256 aa).

A divalent metal cation is bound by residues aspartate 8, aspartate 9, serine 40, and asparagine 92.

It belongs to the SurE nucleotidase family. It depends on a divalent metal cation as a cofactor.

It is found in the cytoplasm. The catalysed reaction is a ribonucleoside 5'-phosphate + H2O = a ribonucleoside + phosphate. Functionally, nucleotidase that shows phosphatase activity on nucleoside 5'-monophosphates. The sequence is that of 5'-nucleotidase SurE from Allorhizobium ampelinum (strain ATCC BAA-846 / DSM 112012 / S4) (Agrobacterium vitis (strain S4)).